The sequence spans 493 residues: D-glyceraldehyde dehydrogenase (NADP(+)) (493 aa).

Residues 144 to 147 (TPWN), R155, 170 to 174 (KPSSD), 202 to 208 (KGSEIGD), 223 to 246 (GSTS…ILEL), C279, and 379 to 381 (EIF) each bind NADP(+). Residues N147 and R155 each contribute to the substrate site. Catalysis depends on E245, which acts as the Proton acceptor. C279 provides a ligand contact to substrate. The active-site Proton donor is C279.

The protein belongs to the aldehyde dehydrogenase family. Glyceraldehyde dehydrogenase subfamily. As to quaternary structure, homotetramer. Dimer of dimers.

The enzyme catalyses D-glyceraldehyde + NADP(+) + H2O = (R)-glycerate + NADPH + 2 H(+). It functions in the pathway carbohydrate degradation; glycolysis. Stable for 2 hours at 60 degrees Celsius but activity is decreased to less than 50 percent within 15 minutes at 70 degrees Celsius. NADP-dependent dehydrogenase of the nED (non-phosphorylated Entner-Doudoroff) pathway with highest activity towards glyceraldehydes (e.g. D,L-glyceraldehyde and D-glyceraldehyde), to a lesser extent towards D,L-glyceraldehyde-3-phosphate and glycolaldehyde, but no activity towards aliphatic or aromatic aldehydes. The chain is D-glyceraldehyde dehydrogenase (NADP(+)) from Picrophilus torridus (strain ATCC 700027 / DSM 9790 / JCM 10055 / NBRC 100828 / KAW 2/3).